The primary structure comprises 270 residues: NAD kinase (270 aa).

The Proton acceptor role is filled by aspartate 45. NAD(+)-binding positions include 45–46, 121–122, lysine 147, aspartate 149, 160–165, and alanine 184; these read DG, NE, and TAYSKS.

The protein belongs to the NAD kinase family. Requires a divalent metal cation as cofactor.

Its subcellular location is the cytoplasm. It catalyses the reaction NAD(+) + ATP = ADP + NADP(+) + H(+). Functionally, involved in the regulation of the intracellular balance of NAD and NADP, and is a key enzyme in the biosynthesis of NADP. Catalyzes specifically the phosphorylation on 2'-hydroxyl of the adenosine moiety of NAD to yield NADP. The sequence is that of NAD kinase from Lactobacillus johnsonii (strain CNCM I-12250 / La1 / NCC 533).